The chain runs to 337 residues: Transmembrane protein 120B (337 aa).

Positions 1–39 (MSLERCQSEWTEIEQEYQQLQETHKVYRQKLEELTNLQA) form a coiled coil. 6 helical membrane passes run 100 to 122 (GLYL…AKFA), 130 to 150 (FKLY…FLLN), 157 to 175 (IFNF…RESI), 185 to 205 (GWWV…LTWP), 268 to 288 (FLLP…VTLF), and 300 to 320 (QVFM…LTTL).

This sequence belongs to the TMEM120 family.

It localises to the nucleus inner membrane. Functionally, necessary for efficient adipogenesis. Does not show ion channel activity. This is Transmembrane protein 120B (tmem120b) from Danio rerio (Zebrafish).